The following is a 260-amino-acid chain: Hydroxyethylthiazole kinase (260 aa).

ATP contacts are provided by Arg-126 and Ser-172. Residue Gly-199 participates in substrate binding.

The protein belongs to the Thz kinase family. The cofactor is Mg(2+).

The enzyme catalyses 5-(2-hydroxyethyl)-4-methylthiazole + ATP = 4-methyl-5-(2-phosphooxyethyl)-thiazole + ADP + H(+). The protein operates within cofactor biosynthesis; thiamine diphosphate biosynthesis; 4-methyl-5-(2-phosphoethyl)-thiazole from 5-(2-hydroxyethyl)-4-methylthiazole: step 1/1. In terms of biological role, catalyzes the phosphorylation of the hydroxyl group of 4-methyl-5-beta-hydroxyethylthiazole (THZ). This chain is Hydroxyethylthiazole kinase, found in Burkholderia thailandensis (strain ATCC 700388 / DSM 13276 / CCUG 48851 / CIP 106301 / E264).